A 272-amino-acid chain; its full sequence is Ribosomal RNA small subunit methyltransferase A (272 aa).

The S-adenosyl-L-methionine site is built by Asn18, Leu20, Gly45, Glu66, Asp91, and Asn113.

Belongs to the class I-like SAM-binding methyltransferase superfamily. rRNA adenine N(6)-methyltransferase family. RsmA subfamily.

The protein localises to the cytoplasm. The catalysed reaction is adenosine(1518)/adenosine(1519) in 16S rRNA + 4 S-adenosyl-L-methionine = N(6)-dimethyladenosine(1518)/N(6)-dimethyladenosine(1519) in 16S rRNA + 4 S-adenosyl-L-homocysteine + 4 H(+). Its function is as follows. Specifically dimethylates two adjacent adenosines (A1518 and A1519) in the loop of a conserved hairpin near the 3'-end of 16S rRNA in the 30S particle. May play a critical role in biogenesis of 30S subunits. This chain is Ribosomal RNA small subunit methyltransferase A, found in Photorhabdus laumondii subsp. laumondii (strain DSM 15139 / CIP 105565 / TT01) (Photorhabdus luminescens subsp. laumondii).